Here is a 247-residue protein sequence, read N- to C-terminus: UPF0659 protein C216.03 (247 aa).

This sequence belongs to the UPF0659 family.

The protein localises to the cytoplasm. Its subcellular location is the nucleus. The protein is UPF0659 protein C216.03 of Schizosaccharomyces pombe (strain 972 / ATCC 24843) (Fission yeast).